The following is a 444-amino-acid chain: Zeaxanthin 4-ketolase (444 aa).

The segment at 408–444 (VAGGSSSGGGGEGGKPGAGEHGLLQRQRQLAPVGVMA) is disordered. A compositionally biased stretch (gly residues) spans 412-427 (SSSGGGGEGGKPGAGE).

The catalysed reaction is all-trans-adonixanthin + 2 AH2 + 2 O2 = all-trans-(3S,3'S)-astaxanthin + 2 A + 3 H2O. The enzyme catalyses all-trans-zeaxanthin + 2 AH2 + 2 O2 = all-trans-adonixanthin + 2 A + 3 H2O. It catalyses the reaction echinenone + 2 AH2 + 2 O2 = canthaxanthin + 2 A + 3 H2O. It carries out the reaction all-trans-beta-carotene + 2 AH2 + 2 O2 = echinenone + 2 A + 3 H2O. It participates in carotenoid biosynthesis; astaxanthin biosynthesis. In terms of biological role, involved in the biosynthesis of ketocarotenoids which are powerful anti-oxidative molecules. Catalyzes the conversion of zeaxanthin to astaxanthin via adonixanthin. Catalyzes the conversion of beta-carotene to canthaxanthin via echinenone. The chain is Zeaxanthin 4-ketolase from Chlamydomonas reinhardtii (Chlamydomonas smithii).